A 52-amino-acid chain; its full sequence is ATP synthase protein 8 (52 aa).

A helical membrane pass occupies residues 6–26 (PLLWLNLFLMFSATFVMFIVL).

Belongs to the ATPase protein 8 family. As to quaternary structure, F-type ATPases have 2 components, CF(1) - the catalytic core - and CF(0) - the membrane proton channel.

It is found in the mitochondrion membrane. Mitochondrial membrane ATP synthase (F(1)F(0) ATP synthase or Complex V) produces ATP from ADP in the presence of a proton gradient across the membrane which is generated by electron transport complexes of the respiratory chain. F-type ATPases consist of two structural domains, F(1) - containing the extramembraneous catalytic core and F(0) - containing the membrane proton channel, linked together by a central stalk and a peripheral stalk. During catalysis, ATP synthesis in the catalytic domain of F(1) is coupled via a rotary mechanism of the central stalk subunits to proton translocation. Part of the complex F(0) domain. Minor subunit located with subunit a in the membrane. The sequence is that of ATP synthase protein 8 (MT-ATP8) from Penaeus monodon (Giant tiger prawn).